Consider the following 1427-residue polypeptide: Protein NPAT (1427 aa).

The interaction with MIZF stretch occupies residues 1-318 (MLLPSDVARL…EEAIQDILEQ (318 aa)). The 33-residue stretch at 3–35 (LPSDVARLVLGYLQQENLISTCQTFILESSDLK) folds into the LisH domain. Required for activation of histone gene transcription and interaction with MIZF regions lie at residues 5 to 25 (SDVA…STCQ) and 121 to 145 (KRQR…YLSG). The tract at residues 199 to 231 (KKAHASLMSPGRRKSESQRKSTTLSGPHSTIRN) is disordered. The residue at position 207 (Ser-207) is a Phosphoserine. Polar residues predominate over residues 218–231 (KSTTLSGPHSTIRN). A mediates transcriptional activation region spans residues 262 to 338 (KLAENINKFL…FDLFDYGKTK (77 aa)). Ser-554 and Ser-599 each carry phosphoserine. The segment covering 628 to 644 (SLSSTKQPSNDSASVEL) has biased composition (polar residues). 2 disordered regions span residues 628–669 (SLSS…VKEE) and 683–732 (EKVA…SAEI). Residues 629–653 (LSSTKQPSNDSASVELNHTENEAQA) are required for acceleration of G1 phase. Residues 654-665 (SKSENSQEPSSS) are compositionally biased toward low complexity. A compositionally biased stretch (polar residues) spans 695–711 (VENSHSLPPESVCSSVG). Phosphoserine; by CDK2 occurs at positions 775 and 779. Required for acceleration of G1 phase stretches follow at residues 828–853 (QNED…IQLM) and 1039–1054 (KSEE…SIVP). Disordered regions lie at residues 1095 to 1121 (FPNL…EKEK) and 1133 to 1152 (SAIS…KVSP). The segment covering 1097–1114 (NLDSPNVSSTLKPPSNNA) has biased composition (polar residues). The residue at position 1100 (Ser-1100) is a Phosphoserine; by CDK2. Residues Lys-1116 and Lys-1149 each participate in a glycyl lysine isopeptide (Lys-Gly) (interchain with G-Cter in SUMO2) cross-link. Residues 1140–1151 (TIRETQSEKKVS) are compositionally biased toward basic and acidic residues. Ser-1151 and Ser-1200 each carry phosphoserine. Lys-1228 is subject to N6-acetyllysine. Positions 1228-1252 (KDLKQEQTKSASSLITTEMLQDIQR) are required for acceleration of G1 phase. Disordered regions lie at residues 1253–1327 (HSSV…SENS) and 1348–1413 (SATP…FPAG). A Phosphoserine modification is found at Ser-1254. Thr-1270 carries the phosphothreonine; by CDK2 modification. Over residues 1276 to 1285 (GEKHKEEPID) the composition is skewed to basic and acidic residues. Lys-1280 participates in a covalent cross-link: Glycyl lysine isopeptide (Lys-Gly) (interchain with G-Cter in SUMO2). The interval 1325–1349 (ENSVNMAAHTLMILSRAAISRTTSA) is required for acceleration of G1 phase. The span at 1348-1365 (SATPLKDNTQQFRASSRS) shows a compositional bias: polar residues. A Phosphothreonine; by CDK2 modification is found at Thr-1350. A compositionally biased stretch (basic and acidic residues) spans 1371–1382 (KIEELDERERNS). Polar residues predominate over residues 1383–1394 (RPSSKNLTNSSI). The segment covering 1396 to 1406 (MKKKKIKKKKL) has biased composition (basic residues).

This sequence belongs to the NPAT family. In terms of assembly, interacts with the cylin/CDK complexes CCNE1/CDK2 and CCNA1/CDK2. Interacts with BZW1, CASP8AP2, CREBBP, MIZF and YY1. Interacts with the RUVBL1, RUVBL2 and TRRAP subunits of the NuA4 complex. May also interact with GAPDH, NME1, NME2 and STIP1. Phosphorylated at Ser-775, Ser-779, Ser-1100, Thr-1270 and Thr-1350 by CCNE1/CDK2 at G1-S transition and until prophase, which promotes association with histone gene clusters and stimulates activation of histone transcription. Also phosphorylated by CCNA1/CDK2 in vitro. Ubiquitously expressed.

It localises to the nucleus. Its subcellular location is the cajal body. Functionally, required for progression through the G1 and S phases of the cell cycle and for S phase entry. Activates transcription of the histone H2A, histone H2B, histone H3 and histone H4 genes in conjunction with MIZF. Also positively regulates the ATM, MIZF and PRKDC promoters. Transcriptional activation may be accomplished at least in part by the recruitment of the NuA4 histone acetyltransferase (HAT) complex to target gene promoters. The chain is Protein NPAT (NPAT) from Homo sapiens (Human).